Reading from the N-terminus, the 314-residue chain is Ketimine reductase mu-crystallin (314 aa).

Arg-47 contributes to the 3,3',5-triiodo-L-thyronine binding site. Positions 82, 92, 119, 144, 146, 147, 168, 169, 170, 173, 205, 206, 226, and 228 each coordinate NADPH. Glu-257 provides a ligand contact to 3,3',5-triiodo-L-thyronine. Ser-292 lines the NADPH pocket.

It belongs to the ornithine cyclodeaminase/mu-crystallin family. In terms of assembly, homodimer. Binds the thyroid hormone triiodothyronine (T3); T3 binding inhibits enzymatic activity. Expressed in neural tissues, muscle and kidney. Expressed in the inner ear.

It is found in the cytoplasm. It catalyses the reaction L-pipecolate + NADP(+) = Delta(1)-piperideine-2-carboxylate + NADPH + H(+). The catalysed reaction is L-pipecolate + NAD(+) = Delta(1)-piperideine-2-carboxylate + NADH + H(+). The enzyme catalyses L-proline + NADP(+) = 1-pyrroline-2-carboxylate + NADPH + H(+). It carries out the reaction L-proline + NAD(+) = 1-pyrroline-2-carboxylate + NADH + H(+). It catalyses the reaction (3R)-1,4-thiomorpholine-3-carboxylate + NAD(+) = 3,4-dehydrothiomorpholine-3-carboxylate + NADH + 2 H(+). The catalysed reaction is (3R)-1,4-thiomorpholine-3-carboxylate + NADP(+) = 3,4-dehydrothiomorpholine-3-carboxylate + NADPH + 2 H(+). The enzyme catalyses (S)-cystathionine ketimine + NADH + 2 H(+) = (3R,5S)-2,3,5,6,7-pentahydro-1,4-thiazepine-3,5-dicarboxylate + NAD(+). It carries out the reaction (S)-cystathionine ketimine + NADPH + 2 H(+) = (3R,5S)-2,3,5,6,7-pentahydro-1,4-thiazepine-3,5-dicarboxylate + NADP(+). It catalyses the reaction (R)-lanthionine ketimine + NADPH + 2 H(+) = (3R,5R)-1,4-thiomorpholine-3,5-dicarboxylate + NADP(+). The catalysed reaction is Delta(2)-thiazoline-2-carboxylate + NADPH + 2 H(+) = L-thiazolidine-2-carboxylate + NADP(+). With respect to regulation, inhibited by thyroid hormones triiodothyronine (T3) and thyroxine (T4). Functionally, catalyzes the NAD(P)H-dependent reduction of imine double bonds of a number of cyclic ketimine substrates, including sulfur-containing cyclic ketimines. Under physiological conditions, it efficiently catalyzes delta(1)-piperideine-2-carboxylate (P2C) and delta(1)-pyrroline-2-carboxylate (Pyr2C) reduction, suggesting a central role in lysine and glutamate metabolism. Additional substrates are delta(2)-thiazoline-2-carboxylate (T2C), 3,4-dehydrothiomorpholine-3-carboxylate (AECK), and (R)-lanthionine ketimine (LK) that is reduced at very low rate compared to other substrates. Also catalyzes the NAD(P)H-dependent reduction of (S)-cystathionine ketimine (CysK). The protein is Ketimine reductase mu-crystallin of Homo sapiens (Human).